The primary structure comprises 373 residues: Probable pectin lyase D (373 aa).

An N-terminal signal peptide occupies residues 1–24 (MKYAAALTAVAALAARAAAVGVSG). Disulfide bonds link Cys-82–Cys-101 and Cys-91–Cys-225. Asn-128 carries N-linked (GlcNAc...) asparagine glycosylation. The active site involves Arg-255. Asn-274 carries N-linked (GlcNAc...) asparagine glycosylation. The cysteines at positions 321 and 329 are disulfide-linked. Asn-348 carries N-linked (GlcNAc...) asparagine glycosylation. Low complexity predominate over residues 354 to 366 (LPSADAASTSPAS). The disordered stretch occupies residues 354 to 373 (LPSADAASTSPASNAGQGNL).

The protein belongs to the polysaccharide lyase 1 family.

It localises to the secreted. The catalysed reaction is Eliminative cleavage of (1-&gt;4)-alpha-D-galacturonan methyl ester to give oligosaccharides with 4-deoxy-6-O-methyl-alpha-D-galact-4-enuronosyl groups at their non-reducing ends.. Pectinolytic enzymes consist of four classes of enzymes: pectin lyase, polygalacturonase, pectin methylesterase and rhamnogalacturonase. Among pectinolytic enzymes, pectin lyase is the most important in depolymerization of pectin, since it cleaves internal glycosidic bonds of highly methylated pectins. The polypeptide is Probable pectin lyase D (pelD) (Aspergillus niger (strain ATCC MYA-4892 / CBS 513.88 / FGSC A1513)).